The following is a 124-amino-acid chain: Small ribosomal subunit protein uS12 (124 aa).

Residues 1 to 24 (MPTINQLVRRPRKPSVSANKAPAL) are disordered. Residue aspartate 90 is modified to 3-methylthioaspartic acid.

The protein belongs to the universal ribosomal protein uS12 family. In terms of assembly, part of the 30S ribosomal subunit. Contacts proteins S8 and S17. May interact with IF1 in the 30S initiation complex.

Its function is as follows. With S4 and S5 plays an important role in translational accuracy. Functionally, interacts with and stabilizes bases of the 16S rRNA that are involved in tRNA selection in the A site and with the mRNA backbone. Located at the interface of the 30S and 50S subunits, it traverses the body of the 30S subunit contacting proteins on the other side and probably holding the rRNA structure together. The combined cluster of proteins S8, S12 and S17 appears to hold together the shoulder and platform of the 30S subunit. The polypeptide is Small ribosomal subunit protein uS12 (Anaplasma phagocytophilum (strain HZ)).